The sequence spans 295 residues: Glycine--tRNA ligase alpha subunit (295 aa).

Belongs to the class-II aminoacyl-tRNA synthetase family. Tetramer of two alpha and two beta subunits.

The protein localises to the cytoplasm. It carries out the reaction tRNA(Gly) + glycine + ATP = glycyl-tRNA(Gly) + AMP + diphosphate. This Bacillus subtilis (strain 168) protein is Glycine--tRNA ligase alpha subunit (glyQ).